We begin with the raw amino-acid sequence, 906 residues long: Cadherin-2 (906 aa).

Positions M1–A25 are cleaved as a signal peptide. Positions S26 to R159 are excised as a propeptide. A phosphoserine; by FAM20C mark is found at S96 and S135. Cadherin domains are found at residues D160–F267, L268–F382, T383–F497, A498–P603, and Q604–R714. Over D160–A724 the chain is Extracellular. E170 contributes to the Ca(2+) binding site. N-linked (GlcNAc...) asparagine glycosylation occurs at N190. Residues D226, E228, D259, M260, N261, D262, and N263 each contribute to the Ca(2+) site. Residue N273 is glycosylated (N-linked (GlcNAc...) asparagine). Residues D293, D295, and N301 each contribute to the Ca(2+) site. N-linked (GlcNAc...) asparagine glycosylation occurs at N325. D353 lines the Ca(2+) pocket. Residues N402, N572, N651, and N692 are each glycosylated (N-linked (GlcNAc...) asparagine). Residues I725–W745 form a helical membrane-spanning segment. Over M746–D906 the chain is Cytoplasmic. Over residues S863–G880 the composition is skewed to low complexity. Residues S863 to Y884 are disordered.

In terms of assembly, homodimer (via extracellular region). Can also form heterodimers with other cadherins (via extracellular region). Dimerization occurs in trans, i.e. with a cadherin chain from another cell. Interacts with CDCP1. Interacts with PCDH8; this complex may also include TAOK2. The interaction with PCDH8 may lead to internalization through TAOK2/p38 MAPK pathway. Identified in a complex containing FGFR4, NCAM1, CDH2, PLCG1, FRS2, SRC, SHC1, GAP43 and CTTN. May interact with OBSCN (via protein kinase domain 2). Interacts with FBXO45. In terms of processing, cleaved by MMP24. Ectodomain cleavage leads to the generation of a soluble 90 kDa N-terminal soluble fragment and a 45 kDa membrane-bound C-terminal fragment 1 (CTF1), which is further cleaved by gamma-secretase into a 35 kDa. Cleavage in neural stem cells by MMP24 affects CDH2-mediated anchorage of neural stem cells to ependymocytes in the adult subependymal zone, leading to modulate neural stem cell quiescence. Post-translationally, may be phosphorylated by OBSCN.

It localises to the cell membrane. Its subcellular location is the sarcolemma. The protein resides in the cell junction. The protein localises to the cell surface. It is found in the desmosome. It localises to the adherens junction. Its function is as follows. Calcium-dependent cell adhesion protein; preferentially mediates homotypic cell-cell adhesion by dimerization with a CDH2 chain from another cell. Cadherins may thus contribute to the sorting of heterogeneous cell types. Acts as a regulator of neural stem cells quiescence by mediating anchorage of neural stem cells to ependymocytes in the adult subependymal zone: upon cleavage by MMP24, CDH2-mediated anchorage is affected, leading to modulate neural stem cell quiescence. Plays a role in cell-to-cell junction formation between pancreatic beta cells and neural crest stem (NCS) cells, promoting the formation of processes by NCS cells. Required for proper neurite branching. Required for pre- and postsynaptic organization. CDH2 may be involved in neuronal recognition mechanism. In hippocampal neurons, may regulate dendritic spine density. In Homo sapiens (Human), this protein is Cadherin-2 (CDH2).